A 508-amino-acid chain; its full sequence is Cytochrome P450 monooxygenase pkfB (508 aa).

Residues 9 to 29 (FSLGLSQILVCLALLYAAIHI) traverse the membrane as a helical segment. Asn-57 and Asn-305 each carry an N-linked (GlcNAc...) asparagine glycan. Cys-450 is a binding site for heme.

Belongs to the cytochrome P450 family. Heme serves as cofactor.

It is found in the membrane. It participates in secondary metabolite biosynthesis. Cytochrome P450 monooxygenase; part of the gene cluster that mediates the biosynthesis of aspernidine A, a prenylated isoindolinone. The starting point of the biosynthesis of aspernidin A is the production of orsellinaldehyde by the non-reducing polyketide synthase pkfA. Hydroxylation, methylation of one of the phenol groups, and prenylation, presumably catalyzed by the prenyltransferase pkfE, would be needed to yield aspernidine D. Subsequently, the cytochrome P450 monooxygenase pkfB is responsible for hydroxylation of aspernidine D to yield aspernidine E. The dehydrogenase pkfF may be responsible for further oxidation of aspernidine E to form a dialdehyde intermediate which is further transformed in a series of steps, some of which are enzyme-mediated, to generate aspernidine A. The possibility that additional enzymes outside of the cluster are involved in aspernidine A biosynthesis cannot be excluded. The polypeptide is Cytochrome P450 monooxygenase pkfB (Emericella nidulans (strain FGSC A4 / ATCC 38163 / CBS 112.46 / NRRL 194 / M139) (Aspergillus nidulans)).